A 229-amino-acid polypeptide reads, in one-letter code: Glycine betaine/carnitine/choline transport system permease protein OpuCD (229 aa).

An ABC transmembrane type-1 domain is found at 22–202 (FYRHFLMSVY…LMAVIADLVM (181 aa)). Helical transmembrane passes span 27–47 (LMSV…GILI), 55–74 (GWVF…AMLA), 78–100 (LVMG…LPII), 148–168 (ALVI…GGLG), and 182–202 (AIIL…DLVM).

It belongs to the binding-protein-dependent transport system permease family. CysTW subfamily. In terms of assembly, the complex is composed of two ATP-binding proteins (OpuCA), two transmembrane proteins (OpuCB and OpuCD) and a solute-binding protein (OpuCC).

The protein resides in the cell membrane. Its function is as follows. Involved in a high affinity multicomponent binding-protein-dependent transport system for glycine betaine, carnitine and choline; probably responsible for the translocation of the substrate across the membrane. This is Glycine betaine/carnitine/choline transport system permease protein OpuCD (opuCD) from Bacillus subtilis (strain 168).